The sequence spans 341 residues: Adenine deaminase (341 aa).

Zn(2+) contacts are provided by H24, H26, and H204. E207 functions as the Proton donor in the catalytic mechanism. Residue D285 participates in Zn(2+) binding. D286 is a substrate binding site.

The protein belongs to the metallo-dependent hydrolases superfamily. Adenosine and AMP deaminases family. Adenine deaminase type 2 subfamily. The cofactor is Zn(2+).

It carries out the reaction adenine + H2O + H(+) = hypoxanthine + NH4(+). Its function is as follows. Catalyzes the hydrolytic deamination of adenine to hypoxanthine. Plays an important role in the purine salvage pathway and in nitrogen catabolism. The sequence is that of Adenine deaminase from Sphingopyxis alaskensis (strain DSM 13593 / LMG 18877 / RB2256) (Sphingomonas alaskensis).